Here is a 250-residue protein sequence, read N- to C-terminus: NAD-dependent protein deacylase (250 aa).

Residues Met-1–Gln-250 enclose the Deacetylase sirtuin-type domain. Residue Gly-20–Trp-39 participates in NAD(+) binding. Substrate is bound by residues Tyr-64 and Arg-67. Gln-98–Asp-101 contributes to the NAD(+) binding site. The active-site Proton acceptor is the His-116. Residues Cys-124, Cys-127, Cys-150, and Cys-153 each contribute to the Zn(2+) site. NAD(+) contacts are provided by residues Gly-190 to Ser-192, Asn-216 to Glu-218, and Ala-234.

The protein belongs to the sirtuin family. Class III subfamily. It depends on Zn(2+) as a cofactor.

The protein resides in the cytoplasm. The enzyme catalyses N(6)-acetyl-L-lysyl-[protein] + NAD(+) + H2O = 2''-O-acetyl-ADP-D-ribose + nicotinamide + L-lysyl-[protein]. It catalyses the reaction N(6)-succinyl-L-lysyl-[protein] + NAD(+) + H2O = 2''-O-succinyl-ADP-D-ribose + nicotinamide + L-lysyl-[protein]. Its function is as follows. NAD-dependent lysine deacetylase and desuccinylase that specifically removes acetyl and succinyl groups on target proteins. Modulates the activities of several proteins which are inactive in their acylated form. Deacetylates the N-terminal lysine residue of Alba, the major archaeal chromatin protein and that, in turn, increases Alba's DNA binding affinity, thereby repressing transcription. The protein is NAD-dependent protein deacylase of Pyrococcus abyssi (strain GE5 / Orsay).